The sequence spans 572 residues: MLTSQYLLSTSKDIPYDAKIISHQLMIRSGMIRKTSSGLYVWLPTGMRVLKKIKNIITTEMEKINALEILMPIIQPEYLWKESGRLNLYGEELLRFLDRRKNQFILGPTNEEVVTNFIGSEIHSYKQLPLTVYQIQTKFRDEIRPRFGIIRTREFTMKDAYSFHINQSCLENTYNKFYDSYINIFKKMNLNFCAVKADSGSMGGNISHEFQAFSQNGEDEIVFSNDKLYSSNMNMAESIETIDFFKKKYSSCLIKNKTNTKKSIIMSEKLNTPLINQIQTFLIQTKINDITSIAALLIRGDHELNFFKVEKIDIINKPLVFLNEKEVISLIGVKKEFLGPLGLKVPIIADISTFNMKNFTIGSNINKHFFINVNWNIDLPMPIFKDIRKVTKNDLSPNGSGYLNIKQSIEIGHIFQLGQKYSRKIQQSVKIKNGNLKNLYMGCYGIGITRIAAAVIEQHHDKNGIIWPDSIAPFEVVILPINMKKDNKIKIIAHFLYKKFKKTGIDVILDDRDERPGVMFNEVDLIGIPHQIIISKRSINYDNVEYRERKNKENILINIKDIKNFIIQKLKK.

This sequence belongs to the class-II aminoacyl-tRNA synthetase family. ProS type 1 subfamily. In terms of assembly, homodimer.

The protein localises to the cytoplasm. The catalysed reaction is tRNA(Pro) + L-proline + ATP = L-prolyl-tRNA(Pro) + AMP + diphosphate. Functionally, catalyzes the attachment of proline to tRNA(Pro) in a two-step reaction: proline is first activated by ATP to form Pro-AMP and then transferred to the acceptor end of tRNA(Pro). As ProRS can inadvertently accommodate and process non-cognate amino acids such as alanine and cysteine, to avoid such errors it has two additional distinct editing activities against alanine. One activity is designated as 'pretransfer' editing and involves the tRNA(Pro)-independent hydrolysis of activated Ala-AMP. The other activity is designated 'posttransfer' editing and involves deacylation of mischarged Ala-tRNA(Pro). The misacylated Cys-tRNA(Pro) is not edited by ProRS. In Buchnera aphidicola subsp. Acyrthosiphon pisum (strain 5A), this protein is Proline--tRNA ligase.